Here is a 142-residue protein sequence, read N- to C-terminus: 3-hydroxyacyl-[acyl-carrier-protein] dehydratase FabZ (142 aa).

Residue H50 is part of the active site.

It belongs to the thioester dehydratase family. FabZ subfamily.

It localises to the cytoplasm. It carries out the reaction a (3R)-hydroxyacyl-[ACP] = a (2E)-enoyl-[ACP] + H2O. Functionally, involved in unsaturated fatty acids biosynthesis. Catalyzes the dehydration of short chain beta-hydroxyacyl-ACPs and long chain saturated and unsaturated beta-hydroxyacyl-ACPs. This Clostridium botulinum (strain Alaska E43 / Type E3) protein is 3-hydroxyacyl-[acyl-carrier-protein] dehydratase FabZ.